Here is a 200-residue protein sequence, read N- to C-terminus: Methylthioribulose-1-phosphate dehydratase-like protein (200 aa).

It belongs to the aldolase class II family. MtnB subfamily.

The polypeptide is Methylthioribulose-1-phosphate dehydratase-like protein (Schizosaccharomyces pombe (strain 972 / ATCC 24843) (Fission yeast)).